We begin with the raw amino-acid sequence, 535 residues long: Light-independent protochlorophyllide reductase subunit B (535 aa).

D36 serves as a coordination point for [4Fe-4S] cluster. Catalysis depends on D287, which acts as the Proton donor. 422–423 (GL) lines the substrate pocket.

It belongs to the ChlB/BchB/BchZ family. Protochlorophyllide reductase is composed of three subunits; BchL, BchN and BchB. Forms a heterotetramer of two BchB and two BchN subunits. [4Fe-4S] cluster is required as a cofactor.

The catalysed reaction is chlorophyllide a + oxidized 2[4Fe-4S]-[ferredoxin] + 2 ADP + 2 phosphate = protochlorophyllide a + reduced 2[4Fe-4S]-[ferredoxin] + 2 ATP + 2 H2O. The protein operates within porphyrin-containing compound metabolism; bacteriochlorophyll biosynthesis (light-independent). Component of the dark-operative protochlorophyllide reductase (DPOR) that uses Mg-ATP and reduced ferredoxin to reduce ring D of protochlorophyllide (Pchlide) to form chlorophyllide a (Chlide). This reaction is light-independent. The NB-protein (BchN-BchB) is the catalytic component of the complex. The protein is Light-independent protochlorophyllide reductase subunit B of Rhodopseudomonas palustris (strain BisB5).